The sequence spans 376 residues: Probable cysteine protease RDL3 (376 aa).

The N-terminal stretch at 1–27 (MAISFRTLALLTLSVLLISISLGVVTA) is a signal peptide. Residues 28 to 126 (TESQRNEGEV…ERYQYKEGDV (99 aa)) constitute a propeptide, activation peptide. N80 carries N-linked (GlcNAc...) asparagine glycosylation. 2 disulfide bridges follow: C149-C192 and C183-C226. The active site involves C152. N-linked (GlcNAc...) asparagine glycosylation is present at N270. C283 and C336 are oxidised to a cystine. Catalysis depends on residues H290 and N311. An N-linked (GlcNAc...) asparagine glycan is attached at N349.

Belongs to the peptidase C1 family. In terms of tissue distribution, expressed in root hairs.

Functionally, probable thiol protease. The sequence is that of Probable cysteine protease RDL3 from Arabidopsis thaliana (Mouse-ear cress).